Here is a 141-residue protein sequence, read N- to C-terminus: ATP synthase epsilon chain 1 (141 aa).

The protein belongs to the ATPase epsilon chain family. As to quaternary structure, F-type ATPases have 2 components, CF(1) - the catalytic core - and CF(0) - the membrane proton channel. CF(1) has five subunits: alpha(3), beta(3), gamma(1), delta(1), epsilon(1). CF(0) has three main subunits: a, b and c.

It localises to the cell inner membrane. In terms of biological role, produces ATP from ADP in the presence of a proton gradient across the membrane. The chain is ATP synthase epsilon chain 1 from Thiobacillus denitrificans (strain ATCC 25259 / T1).